The primary structure comprises 153 residues: Transcriptional repressor NrdR (153 aa).

Residues 3–34 (CPSCFHNGTRVLDSRPVDEGRSIRRRRECESC) fold into a zinc finger. The ATP-cone domain occupies 49–139 (LIVVKKEGTR…VYRQFKDLNV (91 aa)).

Belongs to the NrdR family. Zn(2+) is required as a cofactor.

Functionally, negatively regulates transcription of bacterial ribonucleotide reductase nrd genes and operons by binding to NrdR-boxes. The sequence is that of Transcriptional repressor NrdR from Bacillus mycoides (strain KBAB4) (Bacillus weihenstephanensis).